Here is a 231-residue protein sequence, read N- to C-terminus: NADH-ubiquinone oxidoreductase chain 4 (231 aa).

The next 6 helical transmembrane spans lie at 1–21 (PIAG…YGII), 34–54 (LFLP…LTCL), 61–80 (SLIA…AIII), 84–106 (WGLS…LFCL), 128–148 (ILPM…ATPP), and 169–189 (TIIL…HMFL).

This sequence belongs to the complex I subunit 4 family.

Its subcellular location is the mitochondrion membrane. It carries out the reaction a ubiquinone + NADH + 5 H(+)(in) = a ubiquinol + NAD(+) + 4 H(+)(out). Its function is as follows. Core subunit of the mitochondrial membrane respiratory chain NADH dehydrogenase (Complex I) that is believed to belong to the minimal assembly required for catalysis. Complex I functions in the transfer of electrons from NADH to the respiratory chain. The immediate electron acceptor for the enzyme is believed to be ubiquinone. The sequence is that of NADH-ubiquinone oxidoreductase chain 4 (MT-ND4) from Metlapilcoatlus nummifer (Mexican jumping pitviper).